Reading from the N-terminus, the 385-residue chain is Glutamate 5-kinase (385 aa).

Lys-17 is a binding site for ATP. 3 residues coordinate substrate: Ser-64, Asp-151, and Asn-165. 185–186 is a binding site for ATP; sequence SD. In terms of domain architecture, PUA spans 291 to 367; that stretch reads SGTVRVDAGA…DQIENVLGYS (77 aa).

Belongs to the glutamate 5-kinase family.

It is found in the cytoplasm. The catalysed reaction is L-glutamate + ATP = L-glutamyl 5-phosphate + ADP. It functions in the pathway amino-acid biosynthesis; L-proline biosynthesis; L-glutamate 5-semialdehyde from L-glutamate: step 1/2. Catalyzes the transfer of a phosphate group to glutamate to form L-glutamate 5-phosphate. The chain is Glutamate 5-kinase from Methanosarcina mazei (strain ATCC BAA-159 / DSM 3647 / Goe1 / Go1 / JCM 11833 / OCM 88) (Methanosarcina frisia).